Reading from the N-terminus, the 60-residue chain is Large ribosomal subunit protein uL30 (60 aa).

This sequence belongs to the universal ribosomal protein uL30 family. Part of the 50S ribosomal subunit.

The polypeptide is Large ribosomal subunit protein uL30 (Lactobacillus johnsonii (strain CNCM I-12250 / La1 / NCC 533)).